The primary structure comprises 369 residues: Protein-glutamate methylesterase/protein-glutamine glutaminase (369 aa).

Positions 4-121 constitute a Response regulatory domain; it reads KVLVVDDSSF…ARNRDEAVSL (118 aa). Asp55 is subject to 4-aspartylphosphate. Over residues 146-171 the composition is skewed to low complexity; it reads ATSSARPLASRTAAPAASAPARPATT. Residues 146–175 are disordered; sequence ATSSARPLASRTAAPAASAPARPATTKFRA. Residues 176-369 enclose the CheB-type methylesterase domain; that stretch reads SGKKYQLTAI…ERMLVEVGLA (194 aa). Catalysis depends on residues Ser188, His215, and Asp311.

The protein belongs to the CheB family. In terms of processing, phosphorylated by CheA. Phosphorylation of the N-terminal regulatory domain activates the methylesterase activity.

It localises to the cytoplasm. It carries out the reaction [protein]-L-glutamate 5-O-methyl ester + H2O = L-glutamyl-[protein] + methanol + H(+). The enzyme catalyses L-glutaminyl-[protein] + H2O = L-glutamyl-[protein] + NH4(+). Involved in chemotaxis. Part of a chemotaxis signal transduction system that modulates chemotaxis in response to various stimuli. Catalyzes the demethylation of specific methylglutamate residues introduced into the chemoreceptors (methyl-accepting chemotaxis proteins or MCP) by CheR. Also mediates the irreversible deamidation of specific glutamine residues to glutamic acid. The protein is Protein-glutamate methylesterase/protein-glutamine glutaminase of Vibrio parahaemolyticus serotype O3:K6 (strain RIMD 2210633).